The chain runs to 334 residues: Nucleoid-associated protein SG1574 (334 aa).

The protein belongs to the YejK family.

It localises to the cytoplasm. Its subcellular location is the nucleoid. The polypeptide is Nucleoid-associated protein SG1574 (Sodalis glossinidius (strain morsitans)).